The chain runs to 316 residues: Phospholipase A1 2 (316 aa).

A signal peptide spans 1 to 4 (ADDL). The propeptide occupies 5–14 (TTLRNGTLDR). C20 and C103 are joined by a disulfide. Catalysis depends on S153, which acts as the Nucleophile. The active-site Charge relay system is the D181. 2 disulfide bridges follow: C192/C197 and C235/C240. H242 serves as the catalytic Charge relay system. 3 cysteine pairs are disulfide-bonded: C257/C284, C258/C309, and C277/C282.

This sequence belongs to the AB hydrolase superfamily. Lipase family. In terms of tissue distribution, expressed by the venom gland.

The protein resides in the secreted. It carries out the reaction a 1,2-diacyl-sn-glycero-3-phosphocholine + H2O = a 2-acyl-sn-glycero-3-phosphocholine + a fatty acid + H(+). Its function is as follows. Catalyzes the hydrolysis of phosphatidylcholine with phospholipase A1 activity. May act as an allergen and induce hemolytic activity. This chain is Phospholipase A1 2, found in Polistes dominula (European paper wasp).